A 134-amino-acid polypeptide reads, in one-letter code: Inner membrane protein YqjE (134 aa).

At 1–55 the chain is on the cytoplasmic side; it reads MADTHHAQGPGKSVLGIGQRIVSIMVEMVETRLRLAVVELEEEKANLFQLLLMLG. Residues 56–76 form a helical membrane-spanning segment; that stretch reads LTMLFAAFGLMSLMVLIIWAV. Residues 77–83 are Periplasmic-facing; the sequence is DPQYRLN. The chain crosses the membrane as a helical span at residues 84–104; sequence AMIATTVVLLLLALIGGIWTL. The Cytoplasmic portion of the chain corresponds to 105–134; the sequence is RKSRKSTLLRHTRHELANDRQLLEEESREQ.

The protein resides in the cell inner membrane. The polypeptide is Inner membrane protein YqjE (yqjE) (Escherichia coli O157:H7).